The sequence spans 73 residues: Antimicrobial peptide lumbricin-PG (73 aa).

The signal sequence occupies residues methionine 1–threonine 14. Residues arginine 25–proline 48 are disordered.

It is found in the secreted. Displays antimicrobial activity against the Gram-positive bacterium S.aureus ATCC 2592, the Gram-negative bacteria E.coli ATCC 25922 and P.aeruginosa ATCC 27853, and the fungus C.albicans ATCC 2002. Displays stronger activity against P.aeruginosa and S.aureus than E.coli. Displays very weak hemolytic activity. The chain is Antimicrobial peptide lumbricin-PG from Metaphire guillelmi (Earthworm).